The sequence spans 414 residues: Esterase FrsA (414 aa).

The protein belongs to the FrsA family.

It carries out the reaction a carboxylic ester + H2O = an alcohol + a carboxylate + H(+). Catalyzes the hydrolysis of esters. The sequence is that of Esterase FrsA from Salmonella typhi.